The sequence spans 171 residues: Large ribosomal subunit protein bL9 (171 aa).

It belongs to the bacterial ribosomal protein bL9 family.

In terms of biological role, binds to the 23S rRNA. This chain is Large ribosomal subunit protein bL9, found in Orientia tsutsugamushi (strain Ikeda) (Rickettsia tsutsugamushi).